A 556-amino-acid polypeptide reads, in one-letter code: Glutamine--tRNA ligase (556 aa).

Residues 34–44 (PEPNGYLHIGH) carry the 'HIGH' region motif. ATP is bound by residues 35 to 37 (EPN) and 41 to 47 (HIGHAKS). L-glutamine contacts are provided by Asp-67 and Tyr-212. ATP contacts are provided by residues Thr-231, 261-262 (RL), and 269-271 (MSK). The 'KMSKS' region motif lies at 268-272 (VMSKR).

It belongs to the class-I aminoacyl-tRNA synthetase family. Monomer.

It localises to the cytoplasm. It carries out the reaction tRNA(Gln) + L-glutamine + ATP = L-glutaminyl-tRNA(Gln) + AMP + diphosphate. The polypeptide is Glutamine--tRNA ligase (Vibrio campbellii (strain ATCC BAA-1116)).